Consider the following 870-residue polypeptide: Dynamin-2 (870 aa).

Positions 28–294 (HLDLPQIAVV…LTNHIRESLP (267 aa)) constitute a Dynamin-type G domain. A G1 motif region spans residues 38–45 (GGQSAGKS). 7 residues coordinate GDP: serine 41, glycine 43, lysine 44, serine 45, serine 46, arginine 59, and glycine 60. Residues 64–66 (VTR) form a G2 motif region. Residues 136–139 (DLPG) are G3 motif. The interval 205 to 208 (TKLD) is G4 motif. GDP-binding residues include lysine 206, aspartate 208, and aspartate 211. A Phosphotyrosine modification is found at tyrosine 231. The interval 235–238 (VNRS) is G5 motif. GDP is bound by residues asparagine 236, arginine 237, and glutamine 239. N6-acetyllysine is present on lysine 299. One can recognise a PH domain in the interval 519 to 625 (LVIRRGWLTI…WKASFLRAGV (107 aa)). Tyrosine 597 is subject to Phosphotyrosine. Lysine 598 bears the N6-acetyllysine mark. The GED domain occupies 653 to 744 (VETIRNLVDS…IIGDISTSTV (92 aa)). A disordered region spans residues 741–870 (TSTVSTPVPP…IRPAEPSLLD (130 aa)). At threonine 755 the chain carries Phosphothreonine. A compositionally biased stretch (polar residues) spans 756–767 (WLQNTSSHSPTP). Serine 764 carries the phosphoserine; by CDK1 modification. Residues 826-846 (SAPPQIPSRPARIPPGIPPGV) are compositionally biased toward pro residues. Residues 847–864 (PSRRAPAAPSRPTIIRPA) are compositionally biased toward low complexity.

This sequence belongs to the TRAFAC class dynamin-like GTPase superfamily. Dynamin/Fzo/YdjA family. In terms of assembly, oligomerizes into a helical polymer that self-assembles around the vesicle membrane, when associated to the menbrane through lipid binding. Interacts with SHANK1 and SHANK2. Interacts with SNX9. Interacts (via C-terminal proline-rich domain (PRD)) with SNX18 (via SH3 domain); this interaction regulates ATG9A and ATG16L1 trafficking from recycling endosomes to sites of autophagosome formation. Interacts with SNX33 (via SH3 domain). Interacts with PSTPIP1 (via SH3 domain). Interacts with CTNND2. Interacts (via C-terminal proline-rich domain (PRD)) with BIN1 (via SH3 domain); this interaction allows the recruitment of DNM2 to the membrane tubules and inhibits self-assembly-stimulated GTPase activity on the membrane. Interacts with GABARAP, GABARAPL1 and GABARAPL2. Interacts with MAP1LC3B (the lipidate and non-lipidated LC3 form); this interaction mediates recycling endosome scission leading to autophagosome release. Interacts with ITSN1. Interacts with MYOF. May interact with PIK3C3. May be a component of a complex composed of RAB5A (in GDP-bound form), DYN2 and PIK3C3. Interacts with SDC4; this interaction is markedly enhanced at focal ahesion site upon induction of focal adhesions and stress-fiber formation. Interacts with ACTN1. Interacts with CTTN; this interaction stimulates the intrinsic GTPase activity of DNM2 and stabilizes the association of DNM2 and actin filaments; in addition this interaction is stimulated by ligand binding to the receptor, leading to the recruitment of the DNM2-CTTN complex to the sequestered receptor-ligand complex to its internalization. Interacts with NOSTRIN (via SH3 domain); this interaction allows the recruitment of NOS3 to dynamin-positive structures. Interacts (via C-terminal proline-rich domain (PRD)) with SH3BP4 (via SH3 domain); this interaction controls the GTPase activity and is prevented by EGFR-induced tyrosine phosphorylation of either DNM2 or SH3BP4. Interacts with MYO1E (via SH3 domain). Interacts with TUBG1; this interaction may participate in centrosome cohesion. Phosphorylation at Ser-848 by GSK3-alpha relieves the inhibition of BIN1 and promotes endocytosis. Phosphorylation at Ser-764 by CDK1 is greatly increased upon mitotic entry. It regulates cytokinesis downstream of calcineurin, and does not affect clathrin-mediated endocytosis. Dephosphorylated by calcineurin/PP2 during cytokinesis in a Ca(2+)- and calmodulin-dependent manner. Phosphorylated on tyrosine residues by EGFR. Phosphorylated on tyrosine residues after activation of SRC. As to expression, ubiquitously expressed. Brain expression is restricted to glial cells and fibroblasts. Highest levels in the testis.

Its subcellular location is the cytoplasm. It localises to the cytoskeleton. It is found in the cytoplasmic vesicle. The protein localises to the clathrin-coated vesicle. The protein resides in the cell projection. Its subcellular location is the uropodium. It localises to the endosome. It is found in the microtubule organizing center. The protein localises to the centrosome. The protein resides in the centriole. Its subcellular location is the recycling endosome. It localises to the phagocytic cup. It is found in the phagosome membrane. The protein localises to the podosome. The protein resides in the cell junction. Its subcellular location is the postsynaptic density. It localises to the synapse. It is found in the synaptosome. The protein localises to the midbody. The protein resides in the membrane. Its subcellular location is the clathrin-coated pit. It localises to the cell membrane. It catalyses the reaction GTP + H2O = GDP + phosphate + H(+). Its function is as follows. Catalyzes the hydrolysis of GTP and utilizes this energy to mediate vesicle scission at plasma membrane during endocytosis and filament remodeling at many actin structures during organization of the actin cytoskeleton. Plays an important role in vesicular trafficking processes, namely clathrin-mediated endocytosis (CME), exocytic and clathrin-coated vesicle from the trans-Golgi network, and PDGF stimulated macropinocytosis. During vesicular trafficking process, associates to the membrane, through lipid binding, and self-assembles into ring-like structure through oligomerization to form a helical polymer around the vesicle membrane and leading to vesicle scission. Plays a role in organization of the actin cytoskeleton by mediating arrangement of stress fibers and actin bundles in podocytes. During organization of the actin cytoskeleton, self-assembles into ring-like structure that directly bundles actin filaments to form typical membrane tubules decorated with dynamin spiral polymers. Self-assembly increases GTPase activity and the GTP hydrolysis causes the rapid depolymerization of dynamin spiral polymers, and results in dispersion of actin bundles. Remodels, through its interaction with CTTN, bundled actin filaments in a GTPase-dependent manner and plays a role in orchestrating the global actomyosin cytoskeleton. The interaction with CTTN stabilizes the interaction of DNM2 and actin filaments and stimulates the intrinsic GTPase activity that results in actin filament-barbed ends and increases the sensitivity of filaments in bundles to the actin depolymerizing factor, CFL1. Plays a role in the autophagy process, by participating in the formation of ATG9A vesicles destined for the autophagosomes through its interaction with SNX18, by mediating recycling endosome scission leading to autophagosome release through MAP1LC3B interaction and by regulating maturation of apoptotic cell corpse-containing phagosomes by recruiting PIK3C3 to the phagosome membrane. Also plays a role in cytokinesis. May participate in centrosome cohesion through its interaction with TUBG1. Plays a role in the regulation of neuron morphology, axon growth and formation of neuronal growth cones. Involved in membrane tubulation. This is Dynamin-2 from Rattus norvegicus (Rat).